A 370-amino-acid chain; its full sequence is 4-hydroxy-3-methylbut-2-en-1-yl diphosphate synthase (flavodoxin) (370 aa).

[4Fe-4S] cluster-binding residues include Cys-268, Cys-271, Cys-303, and Glu-310.

It belongs to the IspG family. The cofactor is [4Fe-4S] cluster.

It carries out the reaction (2E)-4-hydroxy-3-methylbut-2-enyl diphosphate + oxidized [flavodoxin] + H2O + 2 H(+) = 2-C-methyl-D-erythritol 2,4-cyclic diphosphate + reduced [flavodoxin]. The protein operates within isoprenoid biosynthesis; isopentenyl diphosphate biosynthesis via DXP pathway; isopentenyl diphosphate from 1-deoxy-D-xylulose 5-phosphate: step 5/6. Functionally, converts 2C-methyl-D-erythritol 2,4-cyclodiphosphate (ME-2,4cPP) into 1-hydroxy-2-methyl-2-(E)-butenyl 4-diphosphate. This is 4-hydroxy-3-methylbut-2-en-1-yl diphosphate synthase (flavodoxin) from Bacillus cereus (strain B4264).